The primary structure comprises 968 residues: RNA polymerase-associated protein RapA (968 aa).

In terms of domain architecture, Helicase ATP-binding spans 164 to 334 (EVGQRHAPRV…FARLRLLDPD (171 aa)). Residue 177–184 (DEVGLGKT) coordinates ATP. Residues 280 to 283 (DEAH) carry the DEAH box motif. In terms of domain architecture, Helicase C-terminal spans 490–664 (RVEWLLNYLI…ATPSEQEGLD (175 aa)).

This sequence belongs to the SNF2/RAD54 helicase family. RapA subfamily. In terms of assembly, interacts with the RNAP. Has a higher affinity for the core RNAP than for the holoenzyme. Its ATPase activity is stimulated by binding to RNAP.

Its function is as follows. Transcription regulator that activates transcription by stimulating RNA polymerase (RNAP) recycling in case of stress conditions such as supercoiled DNA or high salt concentrations. Probably acts by releasing the RNAP, when it is trapped or immobilized on tightly supercoiled DNA. Does not activate transcription on linear DNA. Probably not involved in DNA repair. The protein is RNA polymerase-associated protein RapA of Yersinia enterocolitica serotype O:8 / biotype 1B (strain NCTC 13174 / 8081).